Here is a 157-residue protein sequence, read N- to C-terminus: SsrA-binding protein (157 aa).

Positions 138-151 are enriched in basic and acidic residues; sequence ATEAKRDWGREKQR. Residues 138-157 form a disordered region; that stretch reads ATEAKRDWGREKQRLLKQHS.

It belongs to the SmpB family.

It is found in the cytoplasm. In terms of biological role, required for rescue of stalled ribosomes mediated by trans-translation. Binds to transfer-messenger RNA (tmRNA), required for stable association of tmRNA with ribosomes. tmRNA and SmpB together mimic tRNA shape, replacing the anticodon stem-loop with SmpB. tmRNA is encoded by the ssrA gene; the 2 termini fold to resemble tRNA(Ala) and it encodes a 'tag peptide', a short internal open reading frame. During trans-translation Ala-aminoacylated tmRNA acts like a tRNA, entering the A-site of stalled ribosomes, displacing the stalled mRNA. The ribosome then switches to translate the ORF on the tmRNA; the nascent peptide is terminated with the 'tag peptide' encoded by the tmRNA and targeted for degradation. The ribosome is freed to recommence translation, which seems to be the essential function of trans-translation. This Cereibacter sphaeroides (strain ATCC 17025 / ATH 2.4.3) (Rhodobacter sphaeroides) protein is SsrA-binding protein.